The chain runs to 525 residues: Serine/threonine protein phosphatase 2A 55 kDa regulatory subunit B beta isoform (525 aa).

The disordered stretch occupies residues 1–30 (MDPSSKSPDDDDLRPEAEAARRPQPQPQPR). 2 WD repeats span residues 48–87 (QEVD…DSAS) and 124–165 (EIEE…VKRI). A disordered region spans residues 169–191 (NLNTSQSSGNGTTSSSSSSSSRA). Positions 171–189 (NTSQSSGNGTTSSSSSSSS) are enriched in low complexity. WD repeat units lie at residues 244-282 (AHDY…QSFN), 293-333 (DLTE…LCDN), 352-390 (EIIA…GPVA), and 495-525 (DLST…MYYA).

Belongs to the phosphatase 2A regulatory subunit B family. PP2A consists of a common heteromeric enzyme, composed of a catalytic subunit (subunits C), a constant regulatory subunit (subunit A), and a variety of regulatory subunits such as subunits B (the R2/B/PR55/B55, R3/B''/PR72/PR130/PR59 and R5/B'/B56 families).

The B regulatory subunit may modulate substrate selectivity and catalytic activity, and may also direct the localization of the catalytic enzyme to a particular subcellular compartment. This chain is Serine/threonine protein phosphatase 2A 55 kDa regulatory subunit B beta isoform, found in Oryza sativa subsp. japonica (Rice).